The chain runs to 442 residues: Cell division protein FtsZ (442 aa).

GTP contacts are provided by residues 18-22, 105-107, E136, R140, and D184; these read GGGVN and GTG. The span at 329-341 shows a compositional bias: low complexity; it reads AAPAAEPVQQQVP. A disordered region spans residues 329–442; it reads AAPAAEPVQQ…DDLDVPSFLQ (114 aa). Composition is skewed to basic and acidic residues over residues 349 to 362 and 390 to 431; these read PEKE…REEN and NDRD…RDDR.

Belongs to the FtsZ family. As to quaternary structure, homodimer. Polymerizes to form a dynamic ring structure in a strictly GTP-dependent manner. Interacts directly with several other division proteins.

It localises to the cytoplasm. Essential cell division protein that forms a contractile ring structure (Z ring) at the future cell division site. The regulation of the ring assembly controls the timing and the location of cell division. One of the functions of the FtsZ ring is to recruit other cell division proteins to the septum to produce a new cell wall between the dividing cells. Binds GTP and shows GTPase activity. The polypeptide is Cell division protein FtsZ (Corynebacterium glutamicum (strain ATCC 13032 / DSM 20300 / JCM 1318 / BCRC 11384 / CCUG 27702 / LMG 3730 / NBRC 12168 / NCIMB 10025 / NRRL B-2784 / 534)).